The sequence spans 376 residues: Actin-related protein T1 (376 aa).

Belongs to the actin family. As to expression, in skin, expressed in the basal, spinous and granular layers of the epidermis. Also expressed in hair follicles, sebaceaous glands, eccrine sweat glands and semen.

The protein resides in the cytoplasm. The protein localises to the cytoskeleton. It localises to the nucleus. Its subcellular location is the cytoplasmic vesicle. It is found in the secretory vesicle. The protein resides in the acrosome. Negatively regulates the Hedgehog (SHH) signaling. Binds to the promoter of the SHH signaling mediator, GLI1, and inhibits its expression. The sequence is that of Actin-related protein T1 from Homo sapiens (Human).